The chain runs to 87 residues: Acetolactate synthase isozyme 2 small subunit (87 aa).

In terms of domain architecture, ACT spans 5-78; it reads QVNVSARFNP…DVAHVAICQS (74 aa).

In terms of assembly, tetramer of two large and two small chains. Requires Mg(2+) as cofactor. Thiamine diphosphate serves as cofactor.

It carries out the reaction 2 pyruvate + H(+) = (2S)-2-acetolactate + CO2. The protein operates within amino-acid biosynthesis; L-isoleucine biosynthesis; L-isoleucine from 2-oxobutanoate: step 1/4. Its pathway is amino-acid biosynthesis; L-valine biosynthesis; L-valine from pyruvate: step 1/4. This is Acetolactate synthase isozyme 2 small subunit (ilvM) from Escherichia coli O6:H1 (strain CFT073 / ATCC 700928 / UPEC).